A 400-amino-acid polypeptide reads, in one-letter code: Elongation factor Tu (400 aa).

One can recognise a tr-type G domain in the interval 10-208 (KPHVNVGTIG…AMDNYIPEPQ (199 aa)). The G1 stretch occupies residues 19–26 (GHIDHGKS). 19-26 (GHIDHGKS) contributes to the GTP binding site. Ser-26 contributes to the Mg(2+) binding site. A G2 region spans residues 60-64 (GITIN). Positions 81–84 (DCPG) are G3. GTP-binding positions include 81–85 (DCPGH) and 136–139 (NKTD). The segment at 136–139 (NKTD) is G4. A G5 region spans residues 174–176 (SAL).

Belongs to the TRAFAC class translation factor GTPase superfamily. Classic translation factor GTPase family. EF-Tu/EF-1A subfamily. In terms of assembly, monomer.

Its subcellular location is the cytoplasm. It carries out the reaction GTP + H2O = GDP + phosphate + H(+). Its function is as follows. GTP hydrolase that promotes the GTP-dependent binding of aminoacyl-tRNA to the A-site of ribosomes during protein biosynthesis. The chain is Elongation factor Tu from Thermotoga petrophila (strain ATCC BAA-488 / DSM 13995 / JCM 10881 / RKU-1).